Consider the following 421-residue polypeptide: Imidazolonepropionase (421 aa).

Fe(3+)-binding residues include His-81 and His-83. Residues His-81 and His-83 each coordinate Zn(2+). Residues Arg-90, Tyr-153, and His-186 each contribute to the 4-imidazolone-5-propanoate site. Residue Tyr-153 coordinates N-formimidoyl-L-glutamate. His-251 contacts Fe(3+). His-251 contacts Zn(2+). Glu-254 is a binding site for 4-imidazolone-5-propanoate. Asp-326 serves as a coordination point for Fe(3+). Asp-326 provides a ligand contact to Zn(2+). N-formimidoyl-L-glutamate-binding residues include Asn-328 and Gly-330. Ser-331 serves as a coordination point for 4-imidazolone-5-propanoate.

It belongs to the metallo-dependent hydrolases superfamily. HutI family. Requires Zn(2+) as cofactor. It depends on Fe(3+) as a cofactor.

It is found in the cytoplasm. It catalyses the reaction 4-imidazolone-5-propanoate + H2O = N-formimidoyl-L-glutamate. The protein operates within amino-acid degradation; L-histidine degradation into L-glutamate; N-formimidoyl-L-glutamate from L-histidine: step 3/3. Functionally, catalyzes the hydrolytic cleavage of the carbon-nitrogen bond in imidazolone-5-propanoate to yield N-formimidoyl-L-glutamate. It is the third step in the universal histidine degradation pathway. The chain is Imidazolonepropionase from Streptococcus gordonii (strain Challis / ATCC 35105 / BCRC 15272 / CH1 / DL1 / V288).